Reading from the N-terminus, the 259-residue chain is S-methyl-5'-thioadenosine phosphorylase (259 aa).

Phosphate is bound by residues Ser9 and 50 to 51; that span reads RH. Residue Met175 coordinates substrate. Phosphate is bound at residue Thr176. 199 to 201 lines the substrate pocket; it reads DLD.

It belongs to the PNP/MTAP phosphorylase family. MTAP subfamily. In terms of assembly, homohexamer. Dimer of a homotrimer.

It carries out the reaction S-methyl-5'-thioadenosine + phosphate = 5-(methylsulfanyl)-alpha-D-ribose 1-phosphate + adenine. It participates in amino-acid biosynthesis; L-methionine biosynthesis via salvage pathway; S-methyl-5-thio-alpha-D-ribose 1-phosphate from S-methyl-5'-thioadenosine (phosphorylase route): step 1/1. In terms of biological role, catalyzes the reversible phosphorylation of S-methyl-5'-thioadenosine (MTA) to adenine and 5-methylthioribose-1-phosphate. Involved in the breakdown of MTA, a major by-product of polyamine biosynthesis. Responsible for the first step in the methionine salvage pathway after MTA has been generated from S-adenosylmethionine. Has broad substrate specificity with 6-aminopurine nucleosides as preferred substrates. This chain is S-methyl-5'-thioadenosine phosphorylase, found in Mycolicibacterium smegmatis (strain ATCC 700084 / mc(2)155) (Mycobacterium smegmatis).